The primary structure comprises 651 residues: Crossover junction endonuclease MUS81 (651 aa).

Residues 99-124 (RKHEVSDTSNLPDAKPKKQRKQKQYI) are disordered. Residues 115–124 (KKQRKQKQYI) show a composition bias toward basic residues. The region spanning 361–458 (ILIIDNREIR…QFYYLVEDVV (98 aa)) is the ERCC4 domain.

The protein belongs to the XPF family. As to quaternary structure, interacts with EME1. Requires Mg(2+) as cofactor.

Its subcellular location is the nucleus. Interacts with EME1 to form a DNA structure-specific endonuclease with substrate preference for branched DNA structures with a 5'-end at the branch nick. Typical substrates include 3'-flap structures, D-loops, replication forks and nicked Holliday junctions. May be required in mitosis for the processing of stalled or collapsed replication fork intermediates. May be required in meiosis for the repair of meiosis-specific double strand breaks subsequent to single-end invasion (SEI). This Debaryomyces hansenii (strain ATCC 36239 / CBS 767 / BCRC 21394 / JCM 1990 / NBRC 0083 / IGC 2968) (Yeast) protein is Crossover junction endonuclease MUS81 (MUS81).